The sequence spans 468 residues: MNVMRRLKSIASGRTSISSDPGVDSSLKRPKLDQDNDNLSSRGDDPMQVDQSTDMVVVSQDTVAGTSNVPPPPDQLPEVMNDMRLREDEPHANRGEEDKDMEPPIVNGCGTETGQVITTTVGGRDGKPKQTISYMAQRVVGTGSFGVVFQAKCLETGEQVAIKKVLQDKRYKNRELQIMRLQDHPNVVRLRHSFFSTTDKDELYLNLVLEFVPETVYRALKHYTKMNQHMPIILVQLYTYQICRALNYLHRVVGVCHRDIKPQNLLVNTHTHQLKICDFGSAKMLVPGEPNISYICSRYYRAPELIFGATEYTNAIDMWSGGCVMAELLLGQPLFPGESGIDQLVEIIKILGTPTREEIRCMNPNYTEFKFPQIKAHPWHKIFHKRMPPEAVDLVSRLLQYSPNLRCTALEACAHPFFDDLRAPNVSLPNGRALPPLFNFTAQELAGASTELRQRLIPAHCQGTGNSS.

Disordered regions lie at residues 1-53 (MNVM…DQST) and 91-112 (HANRGEEDKDMEPPIVNGCGTE). In terms of domain architecture, Protein kinase spans 134-418 (YMAQRVVGTG…ALEACAHPFF (285 aa)). ATP contacts are provided by residues 140–148 (VGTGSFGVV) and lysine 163. The Proton acceptor role is filled by aspartate 259. A Phosphotyrosine modification is found at tyrosine 294.

The protein belongs to the protein kinase superfamily. CMGC Ser/Thr protein kinase family. GSK-3 subfamily. In terms of processing, autophosphorylated mainly on threonine and serine residues. In developing pollen.

It catalyses the reaction L-seryl-[protein] + ATP = O-phospho-L-seryl-[protein] + ADP + H(+). It carries out the reaction L-threonyl-[protein] + ATP = O-phospho-L-threonyl-[protein] + ADP + H(+). May mediate extracellular signals to regulate transcription in differentiating cells. In Brassica napus (Rape), this protein is Shaggy-related protein kinase theta.